Reading from the N-terminus, the 352-residue chain is B1 bradykinin receptor (352 aa).

At Met1–Thr41 the chain is on the extracellular side. Residues Asn13 and Asn21 are each glycosylated (N-linked (GlcNAc...) asparagine). The chain crosses the membrane as a helical span at residues Phe42 to Leu62. The Cytoplasmic segment spans residues Leu63–Glu72. Residues Ile73–Ala93 form a helical membrane-spanning segment. The Extracellular segment spans residues Glu94–Arg110. A disulfide bond links Cys109 and Cys188. Residues Val111–Ser131 form a helical membrane-spanning segment. Over Gln132 to Ala153 the chain is Cytoplasmic. The helical transmembrane segment at Arg154 to Leu174 threads the bilayer. The Extracellular segment spans residues Arg175–Asn206. The N-linked (GlcNAc...) asparagine glycan is linked to Asn184. A helical transmembrane segment spans residues Ile207–Ser227. Residues Leu228–Leu250 are Cytoplasmic-facing. The helical transmembrane segment at Ile251 to Leu271 threads the bilayer. Over Glu272 to Gln294 the chain is Extracellular. A helical transmembrane segment spans residues Leu295–Gly315. Over Arg316 to Asn352 the chain is Cytoplasmic. A lipid anchor (S-palmitoyl cysteine) is attached at Cys329.

Belongs to the G-protein coupled receptor 1 family. Bradykinin receptor subfamily. BDKRB1 sub-subfamily.

Its subcellular location is the cell membrane. In terms of biological role, this is a receptor for bradykinin. Could be a factor in chronic pain and inflammation. The chain is B1 bradykinin receptor (BDKRB1) from Macaca fascicularis (Crab-eating macaque).